The chain runs to 907 residues: Translation initiation factor IF-2 (907 aa).

The tract at residues 26–317 (DAGMKKSSSD…KPKSMQHGFD (292 aa)) is disordered. 2 stretches are compositionally biased toward basic and acidic residues: residues 28–44 (GMKK…EKQK) and 101–248 (SAIE…DTDY). The span at 299-308 (KGGRKGKLSK) shows a compositional bias: basic residues. Residues 406–575 (PRAPVVTIMG…LLQAEVLELT (170 aa)) form the tr-type G domain. A G1 region spans residues 415 to 422 (GHVDHGKT). A GTP-binding site is contributed by 415–422 (GHVDHGKT). A G2 region spans residues 440 to 444 (GITQH). Residues 461-464 (DTPG) are G3. Residues 461–465 (DTPGH) and 515–518 (NKID) each bind GTP. The G4 stretch occupies residues 515–518 (NKID). The interval 551–553 (SAK) is G5.

It belongs to the TRAFAC class translation factor GTPase superfamily. Classic translation factor GTPase family. IF-2 subfamily.

The protein resides in the cytoplasm. One of the essential components for the initiation of protein synthesis. Protects formylmethionyl-tRNA from spontaneous hydrolysis and promotes its binding to the 30S ribosomal subunits. Also involved in the hydrolysis of GTP during the formation of the 70S ribosomal complex. The protein is Translation initiation factor IF-2 of Vibrio vulnificus (strain CMCP6).